Here is a 444-residue protein sequence, read N- to C-terminus: ATP-dependent protease ATPase subunit HslU (444 aa).

Residues isoleucine 18, 60–65 (GVGKTE), aspartate 256, glutamate 321, and arginine 393 contribute to the ATP site.

It belongs to the ClpX chaperone family. HslU subfamily. In terms of assembly, a double ring-shaped homohexamer of HslV is capped on each side by a ring-shaped HslU homohexamer. The assembly of the HslU/HslV complex is dependent on binding of ATP.

Its subcellular location is the cytoplasm. In terms of biological role, ATPase subunit of a proteasome-like degradation complex; this subunit has chaperone activity. The binding of ATP and its subsequent hydrolysis by HslU are essential for unfolding of protein substrates subsequently hydrolyzed by HslV. HslU recognizes the N-terminal part of its protein substrates and unfolds these before they are guided to HslV for hydrolysis. The sequence is that of ATP-dependent protease ATPase subunit HslU from Buchnera aphidicola subsp. Baizongia pistaciae (strain Bp).